A 142-amino-acid polypeptide reads, in one-letter code: Hemoglobin subunit alpha-A (142 aa).

One can recognise a Globin domain in the interval 2 to 142 (VLSAADKTNV…VGAVLTAKYR (141 aa)). His59 serves as a coordination point for O2. His88 serves as a coordination point for heme b.

It belongs to the globin family. As to quaternary structure, heterotetramer of two alpha chains and two beta chains. Red blood cells.

Its function is as follows. Involved in oxygen transport from the lung to the various peripheral tissues. The chain is Hemoglobin subunit alpha-A (HBAA) from Mareca penelope (Eurasian wigeon).